Reading from the N-terminus, the 426-residue chain is Probable alpha-galactosidase B (426 aa).

The N-terminal stretch at 1–13 (MSRSKTRQGKLPA) is a signal peptide. Intrachain disulfides connect cysteine 24–cysteine 56 and cysteine 106–cysteine 136. Aspartate 134 (nucleophile) is an active-site residue. 2 N-linked (GlcNAc...) asparagine glycosylation sites follow: asparagine 141 and asparagine 159. Residue 204 to 208 (EWGQA) participates in substrate binding. Asparagine 215 is a glycosylation site (N-linked (GlcNAc...) asparagine). The active-site Proton donor is aspartate 226. The N-linked (GlcNAc...) asparagine glycan is linked to asparagine 265.

The protein belongs to the glycosyl hydrolase 27 family.

Its subcellular location is the secreted. The enzyme catalyses Hydrolysis of terminal, non-reducing alpha-D-galactose residues in alpha-D-galactosides, including galactose oligosaccharides, galactomannans and galactolipids.. Hydrolyzes a variety of simple alpha-D-galactoside as well as more complex molecules such as oligosaccharides and polysaccharides. This Aspergillus fumigatus (strain CBS 144.89 / FGSC A1163 / CEA10) (Neosartorya fumigata) protein is Probable alpha-galactosidase B (aglB).